Here is a 100-residue protein sequence, read N- to C-terminus: Urease subunit gamma (100 aa).

It belongs to the urease gamma subunit family. Heterotrimer of UreA (gamma), UreB (beta) and UreC (alpha) subunits. Three heterotrimers associate to form the active enzyme.

It localises to the cytoplasm. The enzyme catalyses urea + 2 H2O + H(+) = hydrogencarbonate + 2 NH4(+). It functions in the pathway nitrogen metabolism; urea degradation; CO(2) and NH(3) from urea (urease route): step 1/1. In Streptomyces coelicolor (strain ATCC BAA-471 / A3(2) / M145), this protein is Urease subunit gamma.